A 524-amino-acid polypeptide reads, in one-letter code: Na(+)/H(+) antiporter NhaB (524 aa).

Helical transmembrane passes span 13-33 (FLGNSPDWYKLAIMGFLIINP), 98-118 (LLLVFMVAGIYFMKQLLLFVF), 140-160 (AFLSAFLDALTVIAVVISVSV), 239-259 (FFIRMLPVTLPVFIFGLLVCL), 304-324 (AIIGVWLVLALALHLAEVGLV), 325-345 (GLSVIILATSFCGITNEHSLG), 358-378 (LTVFFAVVAVIIEQSLFTPII), 448-468 (ATPNGQAAFLFLLTSALAPLI), and 479-499 (ALPYTLVMTIVGLLGVEFLLV).

This sequence belongs to the NhaB Na(+)/H(+) (TC 2.A.34) antiporter family.

The protein localises to the cell inner membrane. It carries out the reaction 2 Na(+)(in) + 3 H(+)(out) = 2 Na(+)(out) + 3 H(+)(in). Its function is as follows. Na(+)/H(+) antiporter that extrudes sodium in exchange for external protons. The polypeptide is Na(+)/H(+) antiporter NhaB (Yersinia pseudotuberculosis serotype I (strain IP32953)).